Here is a 412-residue protein sequence, read N- to C-terminus: Argininosuccinate synthase (412 aa).

ATP contacts are provided by residues 24-32 and Ala-50; that span reads AFSGGLDTS. L-citrulline is bound by residues Tyr-103 and Ser-108. Position 132 (Gly-132) interacts with ATP. L-aspartate-binding residues include Thr-134, Asn-138, and Asp-139. Residue Asn-138 coordinates L-citrulline. Arg-142 lines the L-citrulline pocket.

This sequence belongs to the argininosuccinate synthase family. Type 1 subfamily. As to quaternary structure, homotetramer.

The protein localises to the cytoplasm. The catalysed reaction is L-citrulline + L-aspartate + ATP = 2-(N(omega)-L-arginino)succinate + AMP + diphosphate + H(+). It functions in the pathway amino-acid biosynthesis; L-arginine biosynthesis; L-arginine from L-ornithine and carbamoyl phosphate: step 2/3. This Xanthomonas axonopodis pv. citri (strain 306) protein is Argininosuccinate synthase.